A 552-amino-acid polypeptide reads, in one-letter code: Lysine--tRNA ligase (552 aa).

The 'HIGH' region motif lies at 72 to 80 (PSGLPHLGT). A 'KMSKS' region motif is present at residues 320-324 (KISKS). ATP is bound at residue Lys323.

The protein belongs to the class-I aminoacyl-tRNA synthetase family.

It localises to the cytoplasm. It catalyses the reaction tRNA(Lys) + L-lysine + ATP = L-lysyl-tRNA(Lys) + AMP + diphosphate. The sequence is that of Lysine--tRNA ligase from Caulobacter vibrioides (strain ATCC 19089 / CIP 103742 / CB 15) (Caulobacter crescentus).